Here is a 360-residue protein sequence, read N- to C-terminus: MKKTLAALIVGAFAASAANAAVVYNNEGTNVELGGRLSVIAEQSNSTRKDQKQQHGELRNAGSRFHIKATHNFGDGFYAQGYLETRLVSDYQSSSDNFGNIITKYAYVTLGNKGFGEVKLGRAKTISDGITSAEDKEYGVLENKEYIPKDGNSVGYTFKGIDGLVLGANYLLAQKREAYKTATATPGEVIAQVISNGVQVGAKYDANNIIAGIAYGRTNYREDLATQDKSGKKQQVNGALSTLGYRFSDLGLLVSLDSGYAKTKNYKDKHEKRYFVSPGFQYELMEDTNVYGNFKYERNSVDQGKKAREHAVLFGVDHKLHKQVLTYIEGAYARTRTNDKGKTEKTEKEKSVGVGLRVYF.

The N-terminal stretch at methionine 1–alanine 20 is a signal peptide.

It belongs to the Gram-negative porin family. As to quaternary structure, homotrimer.

It is found in the cell outer membrane. In terms of biological role, forms pores that allow passive diffusion of small molecules across the outer membrane. The protein is Outer membrane protein P2 (ompP2) of Haemophilus influenzae.